Reading from the N-terminus, the 62-residue chain is Large ribosomal subunit protein bL35 (62 aa).

A compositionally biased stretch (basic residues) spans 1-26; it reads MPKMKTKSGLKKRIKITATGKVKRGN. Residues 1–62 are disordered; that stretch reads MPKMKTKSGL…SDFKRYKELI (62 aa). A compositionally biased stretch (basic and acidic residues) spans 53-62; the sequence is SDFKRYKELI.

The protein belongs to the bacterial ribosomal protein bL35 family.

In Metamycoplasma arthritidis (strain 158L3-1) (Mycoplasma arthritidis), this protein is Large ribosomal subunit protein bL35.